A 564-amino-acid polypeptide reads, in one-letter code: Proline--tRNA ligase (564 aa).

It belongs to the class-II aminoacyl-tRNA synthetase family. ProS type 1 subfamily. As to quaternary structure, homodimer.

Its subcellular location is the cytoplasm. It catalyses the reaction tRNA(Pro) + L-proline + ATP = L-prolyl-tRNA(Pro) + AMP + diphosphate. Functionally, catalyzes the attachment of proline to tRNA(Pro) in a two-step reaction: proline is first activated by ATP to form Pro-AMP and then transferred to the acceptor end of tRNA(Pro). As ProRS can inadvertently accommodate and process non-cognate amino acids such as alanine and cysteine, to avoid such errors it has two additional distinct editing activities against alanine. One activity is designated as 'pretransfer' editing and involves the tRNA(Pro)-independent hydrolysis of activated Ala-AMP. The other activity is designated 'posttransfer' editing and involves deacylation of mischarged Ala-tRNA(Pro). The misacylated Cys-tRNA(Pro) is not edited by ProRS. In Xylella fastidiosa (strain Temecula1 / ATCC 700964), this protein is Proline--tRNA ligase.